Reading from the N-terminus, the 847-residue chain is DNA mismatch repair protein MutS (847 aa).

602 to 609 (GPNMSGKS) provides a ligand contact to ATP. Positions 788 to 807 (EKREASLPASRTDSQKVSEQ) are disordered. Over residues 796–807 (ASRTDSQKVSEQ) the composition is skewed to polar residues.

The protein belongs to the DNA mismatch repair MutS family.

In terms of biological role, this protein is involved in the repair of mismatches in DNA. It is possible that it carries out the mismatch recognition step. This protein has a weak ATPase activity. The sequence is that of DNA mismatch repair protein MutS from Streptococcus gordonii (strain Challis / ATCC 35105 / BCRC 15272 / CH1 / DL1 / V288).